The primary structure comprises 433 residues: NADH-quinone oxidoreductase subunit D (433 aa).

The protein belongs to the complex I 49 kDa subunit family. As to quaternary structure, NDH-1 is composed of 14 different subunits. Subunits NuoB, C, D, E, F, and G constitute the peripheral sector of the complex.

The protein resides in the cell membrane. It carries out the reaction a quinone + NADH + 5 H(+)(in) = a quinol + NAD(+) + 4 H(+)(out). In terms of biological role, NDH-1 shuttles electrons from NADH, via FMN and iron-sulfur (Fe-S) centers, to quinones in the respiratory chain. The immediate electron acceptor for the enzyme in this species is believed to be a menaquinone. Couples the redox reaction to proton translocation (for every two electrons transferred, four hydrogen ions are translocated across the cytoplasmic membrane), and thus conserves the redox energy in a proton gradient. The chain is NADH-quinone oxidoreductase subunit D from Cutibacterium acnes (strain DSM 16379 / KPA171202) (Propionibacterium acnes).